Consider the following 321-residue polypeptide: Fructose-1,6-bisphosphatase 2 class 2 (321 aa).

Mn(2+)-binding residues include Asp32, Glu56, Asp84, and Glu87. Residues 87-89 (EGT), Tyr118, 163-165 (KPR), 185-187 (DGD), and Gly209 contribute to the substrate site. Glu212 contributes to the Mn(2+) binding site.

This sequence belongs to the FBPase class 2 family. In terms of assembly, homodimer. It depends on Mn(2+) as a cofactor.

It catalyses the reaction beta-D-fructose 1,6-bisphosphate + H2O = beta-D-fructose 6-phosphate + phosphate. Its activity is regulated as follows. Competitively inhibited by low concentrations of phosphate (IC50 of 1.2 mM) and is also sensitive to Li(+) (IC50 of 15.8 mM). Also inhibited by 1 mM ATP or 50 mM KCl (60% and 20% residual activity, respectively). Slightly activated (40-50%) by the addition of 1 mM dithiothreitol in vitro. Functionally, catalyzes the hydrolysis of fructose 1,6-bisphosphate to fructose 6-phosphate. Also displays a low activity toward glucose 1,6-bisphosphate, and no activity against ribulose 1,5-bisphosphate, fructose 2,6-bisphosphate, or fructose 1-phosphate. The chain is Fructose-1,6-bisphosphatase 2 class 2 (yggF) from Escherichia coli (strain K12).